The primary structure comprises 3034 residues: Cadherin EGF LAG seven-pass G-type receptor 1 (3034 aa).

The signal sequence occupies residues Met1–Ala29. The Extracellular portion of the chain corresponds to Trp30–Lys2484. Residues Gly222–Gly243 show a composition bias toward low complexity. The interval Gly222 to Val267 is disordered. The N-linked (GlcNAc...) asparagine glycan is linked to Asn236. Cadherin domains follow at residues Pro261 to Phe368, Glu369 to Phe474, Ser475 to Phe580, Val581 to Phe702, Thr703 to Phe804, Gln805 to Phe907, Leu908 to Phe1014, Glu1015 to Leu1116, and Ile1121 to Leu1239. Residues Asn561, Asn649, and Asn793 are each glycosylated (N-linked (GlcNAc...) asparagine). Residues Asn1129, Asn1154, Asn1228, Asn1264, Asn1274, and Asn1302 are each glycosylated (N-linked (GlcNAc...) asparagine). The EGF-like 1; calcium-binding domain maps to Asp1318–Glu1376. Intrachain disulfides connect Cys1322–Cys1333, Cys1327–Cys1364, Cys1366–Cys1375, Cys1382–Cys1393, Cys1387–Cys1402, Cys1404–Cys1413, Cys1422–Cys1433, Cys1427–Cys1443, and Cys1445–Cys1455. Positions Glu1378–Gln1414 constitute an EGF-like 2; calcium-binding domain. The 39-residue stretch at Arg1418 to Glu1456 folds into the EGF-like 3; calcium-binding domain. Positions Val1457–Cys1661 constitute a Laminin G-like 1 domain. Asn1591, Asn1638, and Asn1655 each carry an N-linked (GlcNAc...) asparagine glycan. 13 disulfide bridges follow: Cys1635–Cys1661, Cys1668–Cys1679, Cys1673–Cys1688, Cys1690–Cys1699, Cys1855–Cys1885, Cys1891–Cys1902, Cys1896–Cys1911, Cys1913–Cys1922, Cys1926–Cys1937, Cys1931–Cys1949, Cys1951–Cys1960, Cys1968–Cys1981, and Cys1983–Cys1993. The EGF-like 4; calcium-binding domain occupies Gln1664–Glu1700. The residue at position 1681 (Asn1681) is a (3R)-3-hydroxyasparagine. One can recognise a Laminin G-like 2 domain in the interval Pro1704–Cys1885. One can recognise an EGF-like 5; calcium-binding domain in the interval Val1887–Cys1922. Asp1904 carries the post-translational modification (3R)-3-hydroxyaspartate. Positions Val1923 to Glu1961 constitute an EGF-like 6; calcium-binding domain. One can recognise an EGF-like 7; calcium-binding domain in the interval Asn1962 to Asn1994. A glycan (N-linked (GlcNAc...) asparagine) is linked at Asn1994. One can recognise an EGF-like 8; calcium-binding domain in the interval Thr1996–Asp2031. Cystine bridges form between Cys2000–Cys2015, Cys2002–Cys2018, Cys2020–Cys2030, Cys2039–Cys2048, and Cys2051–Cys2063. A Laminin EGF-like domain is found at Cys2018–Val2065. 6 N-linked (GlcNAc...) asparagine glycosylation sites follow: Asn2118, Asn2137, Asn2144, Asn2155, Asn2160, and Asn2272. Residues Ser2295 to Asp2346 form a disordered region. Residues Pro2312 to Glu2476 form the GAIN-B domain. 2 disulfide bridges follow: Cys2426/Cys2458 and Cys2446/Cys2460. The GPS stretch occupies residues Cys2426–Glu2476. Residues Asn2430 and Asn2452 are each glycosylated (N-linked (GlcNAc...) asparagine). Residues Ile2485–Leu2505 form a helical membrane-spanning segment. The Cytoplasmic portion of the chain corresponds to Ser2506 to His2516. Residues Ser2517–Ile2537 form a helical membrane-spanning segment. Asn2538 is a glycosylation site (N-linked (GlcNAc...) asparagine). Topologically, residues Asn2538 to Asn2542 are extracellular. The helical transmembrane segment at Pro2543–Trp2563 threads the bilayer. Over Thr2564 to Arg2587 the chain is Cytoplasmic. A helical membrane pass occupies residues Phe2588–Asp2608. At Pro2609 to Thr2625 the chain is on the extracellular side. The helical transmembrane segment at Leu2626 to Val2646 threads the bilayer. At Leu2647 to Arg2670 the chain is on the cytoplasmic side. A helical transmembrane segment spans residues Thr2671–Asn2691. Over Ser2692–Thr2694 the chain is Extracellular. A helical transmembrane segment spans residues Leu2695 to Phe2715. The Cytoplasmic segment spans residues His2716 to Pro3034. The interval Thr2774–Pro3034 is disordered. A phosphoserine mark is found at Ser2776, Ser2779, Ser2886, and Ser2888. Residues Thr2893–Arg2909 show a composition bias toward basic and acidic residues. The span at Ser2976–Gly2986 shows a compositional bias: low complexity. The span at Pro3003–Leu3012 shows a compositional bias: basic and acidic residues. Positions Arg3020 to Pro3034 are enriched in polar residues.

Belongs to the G-protein coupled receptor 2 family. LN-TM7 subfamily. The iron and 2-oxoglutarate dependent 3-hydroxylation of aspartate and asparagine is (R) stereospecific within EGF domains. Expressed in the brain, where it is localized principally in the ependymal cell layer, choroid plexus and the area postrema. Also found in spinal cord and in the eye.

Its subcellular location is the cell membrane. Functionally, receptor that may have an important role in cell/cell signaling during nervous system formation. The protein is Cadherin EGF LAG seven-pass G-type receptor 1 (Celsr1) of Mus musculus (Mouse).